Consider the following 532-residue polypeptide: Protein kinase domain-containing protein ppk9 (532 aa).

Residues 23-274 (WLLGRTLGQG…VAEIMQHPWF (252 aa)) enclose the Protein kinase domain. Residues 29 to 37 (LGQGNLAKV) and Lys52 contribute to the ATP site. Residue Asp145 is the Proton acceptor of the active site. Polar residues predominate over residues 316–346 (PSSSVGQIPQPTDHSALSPSKPMSISGTESP). The disordered stretch occupies residues 316 to 349 (PSSSVGQIPQPTDHSALSPSKPMSISGTESPNPD).

Its subcellular location is the cytoplasm. It is found in the nucleus. The protein localises to the cytoskeleton. It localises to the microtubule organizing center. The protein resides in the spindle pole body. The polypeptide is Protein kinase domain-containing protein ppk9 (ppk9) (Schizosaccharomyces pombe (strain 972 / ATCC 24843) (Fission yeast)).